The following is a 2149-amino-acid chain: Serine/threonine-protein kinase WNK2 (2149 aa).

A compositionally biased stretch (basic and acidic residues) spans 1 to 10 (MDGDGGRRDA). 2 disordered regions span residues 1–75 (MDGD…QRRV) and 87–183 (ERAR…EDDL). 2 positions are modified to omega-N-methylarginine: Arg19 and Arg30. Phosphoserine is present on Ser45. Residues 95–114 (APAPAAPAAPPGSPSVPSDP) are compositionally biased toward pro residues. Residues 161 to 172 (AKPEPGRARKDE) show a composition bias toward basic and acidic residues. A compositionally biased stretch (acidic residues) spans 173 to 182 (PEEEEDDEDD). The Protein kinase domain occupies 195–453 (LKFDIELGRG…IKDLLSHAFF (259 aa)). Residues Ser205, 275-278 (TELM), and Lys325 contribute to the ATP site. The active-site Proton acceptor is Asp342. Ser352 and Ser356 each carry phosphoserine; by autocatalysis. A Phosphoserine modification is found at Ser560. 3 disordered regions span residues 578 to 630 (HAQS…DSQS), 703 to 728 (SMSF…APPV), and 1067 to 1133 (QEEQ…ERAS). A compositionally biased stretch (polar residues) spans 605–625 (ASVTSLASDSTFDSGQGSTVY). Residues 709–728 (VLPPPSTPVPTGPSQPAPPV) show a composition bias toward pro residues. Residues 1081-1092 (QSSESFGGSDVT) show a composition bias toward polar residues. A Phosphoserine modification is found at Ser1098. A compositionally biased stretch (basic residues) spans 1115–1126 (ARKHHRRSTRAR). Ser1210 bears the Phosphoserine mark. Disordered stretches follow at residues 1211–1234 (EDTD…CGLA) and 1270–1502 (PATD…GFVD). 2 stretches are compositionally biased toward low complexity: residues 1275-1292 (SESS…EASQ) and 1317-1353 (SQAG…STVP). Residues 1386–1400 (RSAQCTAQPLSTGQG) are compositionally biased toward polar residues. Positions 1470–1485 (LPSPPLGPTAPPPPPS) are enriched in pro residues. A phosphoserine mark is found at Ser1507, Ser1566, and Ser1594. 2 disordered regions span residues 1521–1727 (VPTS…PSSP) and 1739–1778 (ASSI…GGVA). A compositionally biased stretch (polar residues) spans 1553–1567 (SDKTPSLTQQTQPSL). The span at 1587-1597 (SSPMTAESSSS) shows a compositional bias: low complexity. Positions 1610–1629 (ASDSSTAPSVPQDASGSSVP) are enriched in polar residues. Ser1725, Ser1726, Ser1770, and Ser1797 each carry phosphoserine. The span at 1916–1928 (ASSTGHLSDSSRG) shows a compositional bias: polar residues. Residues 1916–1947 (ASSTGHLSDSSRGPPTKDPRGTKAVQTQQPCS) are disordered. A Phosphoserine modification is found at Ser1962. The span at 2018–2031 (SSLYDSPGSSTSSL) shows a compositional bias: polar residues. Disordered stretches follow at residues 2018-2044 (SSLY…PTLH) and 2122-2149 (GPLS…EKPD). A compositionally biased stretch (low complexity) spans 2122–2135 (GPLSTTATPGATPA).

This sequence belongs to the protein kinase superfamily. Ser/Thr protein kinase family. WNK subfamily. As to quaternary structure, forms a complex with the phosphorylated form of STK39 in the brain. The cofactor is Mg(2+). Post-translationally, autophosphorylated. Autophosphorylation at Ser-352 and Ser-356 promotes its activity. In terms of tissue distribution, brain and heart.

The protein localises to the cytoplasm. It localises to the cell membrane. It catalyses the reaction L-seryl-[protein] + ATP = O-phospho-L-seryl-[protein] + ADP + H(+). It carries out the reaction L-threonyl-[protein] + ATP = O-phospho-L-threonyl-[protein] + ADP + H(+). Its activity is regulated as follows. Activation requires autophosphorylation of Ser-356 and, to a lower extent, Ser-352. In terms of biological role, serine/threonine-protein kinase component of the WNK2-SPAK/OSR1 kinase cascade, which plays an important role in the regulation of electrolyte homeostasis, cell signaling, survival, and proliferation. The WNK2-SPAK/OSR1 kinase cascade is composed of WNK2, which mediates phosphorylation and activation of downstream kinases OXSR1/OSR1 and STK39/SPAK. Following activation, OXSR1/OSR1 and STK39/SPAK catalyze phosphorylation of ion cotransporters, regulating their activity. Acts as an activator and inhibitor of sodium-coupled chloride cotransporters and potassium-coupled chloride cotransporters respectively. Activates SLC12A2, SCNN1A, SCNN1B, SCNN1D and SGK1 and inhibits SLC12A5. Negatively regulates the EGF-induced activation of the ERK/MAPK-pathway and the downstream cell cycle progression. Affects MAPK3/MAPK1 activity by modulating the activity of MAP2K1 and this modulation depends on phosphorylation of MAP2K1 by PAK1. WNK2 acts by interfering with the activity of PAK1 by controlling the balance of the activity of upstream regulators of PAK1 activity, RHOA and RAC1, which display reciprocal activity. This is Serine/threonine-protein kinase WNK2 from Mus musculus (Mouse).